Here is a 149-residue protein sequence, read N- to C-terminus: Large ribosomal subunit protein uL13 (149 aa).

It belongs to the universal ribosomal protein uL13 family. As to quaternary structure, part of the 50S ribosomal subunit.

In terms of biological role, this protein is one of the early assembly proteins of the 50S ribosomal subunit, although it is not seen to bind rRNA by itself. It is important during the early stages of 50S assembly. This chain is Large ribosomal subunit protein uL13, found in Bifidobacterium longum subsp. infantis (strain ATCC 15697 / DSM 20088 / JCM 1222 / NCTC 11817 / S12).